We begin with the raw amino-acid sequence, 867 residues long: Cadherin-related family member 1 (867 aa).

Positions 1–21 (MGRGPPAVLAPWMLFLSLAQA) are cleaved as a signal peptide. Residues 22 to 701 (NFAPHFFDNG…LMQTKDNPMK (680 aa)) are Extracellular-facing. 6 Cadherin domains span residues 36 to 135 (NGNM…APRF), 136 to 247 (IQEP…GPVF), 248 to 354 (VGTP…PPTF), 360 to 473 (PQNR…VPKF), 474 to 577 (TSHY…YPQF), and 574 to 689 (YPQF…SPMA). N-linked (GlcNAc...) asparagine glycans are attached at residues Asn58 and Asn89. N-linked (GlcNAc...) asparagine glycans are attached at residues Asn288 and Asn297. A helical membrane pass occupies residues 702–722 (AVGVLAGIMAIIVAITVLIST). Topologically, residues 723–867 (ATFWRNKKSN…KKNLHSKAYF (145 aa)) are cytoplasmic. The tract at residues 767 to 843 (KFVLREAPPN…VAKRKAVGSP (77 aa)) is disordered. The span at 777-786 (ENCNNNSRGS) shows a compositional bias: polar residues. Over residues 790–802 (PQAPAPPPPPSPA) the composition is skewed to pro residues.

In terms of assembly, interacts with PROM1. Post-translationally, undergoes proteolytic cleavage; produces a soluble 95 kDa N-terminal fragment and a 25 kDa cell-associated C-terminal fragment. Expressed in photoreceptor cells of the outer nuclear layer of the retina.

The protein localises to the cell membrane. Its function is as follows. Potential calcium-dependent cell-adhesion protein. May be required for the structural integrity of the outer segment (OS) of photoreceptor cells. This is Cadherin-related family member 1 (CDHR1) from Bos taurus (Bovine).